Consider the following 360-residue polypeptide: Spore germination protein GerQB (360 aa).

10 helical membrane passes run 11-31, 45-65, 84-104, 116-136, 142-162, 188-208, 220-240, 270-290, 300-320, and 331-351; these read SPYM…MLGF, ISTL…YQIL, IGGL…ATTL, FPSI…YYIV, VVAG…FTFF, MKGN…YPFI, YANL…LAFF, IIVS…LWGV, IKQK…SFFL, and TWTG…LWLI.

It belongs to the amino acid-polyamine-organocation (APC) superfamily. Spore germination protein (SGP) (TC 2.A.3.9) family.

The protein localises to the membrane. Functionally, required for the germination response to inosine. Has no role in L-alanine germination. In Bacillus cereus, this protein is Spore germination protein GerQB (gerQB).